The following is a 241-amino-acid chain: Triosephosphate isomerase (241 aa).

9-11 (NWK) contacts substrate. Histidine 96 serves as the catalytic Electrophile. Residue glutamate 165 is the Proton acceptor of the active site. Residues glycine 171, serine 204, and 225–226 (GG) each bind substrate.

This sequence belongs to the triosephosphate isomerase family. Homodimer.

The protein resides in the cytoplasm. It catalyses the reaction D-glyceraldehyde 3-phosphate = dihydroxyacetone phosphate. It functions in the pathway carbohydrate biosynthesis; gluconeogenesis. It participates in carbohydrate degradation; glycolysis; D-glyceraldehyde 3-phosphate from glycerone phosphate: step 1/1. Its function is as follows. Involved in the gluconeogenesis. Catalyzes stereospecifically the conversion of dihydroxyacetone phosphate (DHAP) to D-glyceraldehyde-3-phosphate (G3P). This is Triosephosphate isomerase from Gloeothece citriformis (strain PCC 7424) (Cyanothece sp. (strain PCC 7424)).